We begin with the raw amino-acid sequence, 332 residues long: Divalent cation transporter CmaX (332 aa).

Topologically, residues M1 to I277 are cytoplasmic. A helical membrane pass occupies residues I278–S286. Over F287–G307 the chain is Periplasmic. A helical transmembrane segment spans residues F308–W323. Topologically, residues W324–L332 are cytoplasmic.

This sequence belongs to the CorA metal ion transporter (MIT) (TC 1.A.35) family. Homopentamer.

The protein resides in the cell inner membrane. It carries out the reaction Zn(2+)(in) = Zn(2+)(out). The enzyme catalyses Cd(2+)(in) = Cd(2+)(out). It catalyses the reaction Ni(2+)(in) = Ni(2+)(out). The catalysed reaction is Co(2+)(in) = Co(2+)(out). Transports divalent cations including Zn(2+), Cd(2+), Ni(2+) and Co(2+). The proton gradient has a small influence on transport suggesting that the transport is probably not proton-dependent. The chain is Divalent cation transporter CmaX from Pseudomonas aeruginosa (strain ATCC 15692 / DSM 22644 / CIP 104116 / JCM 14847 / LMG 12228 / 1C / PRS 101 / PAO1).